The chain runs to 208 residues: Small ribosomal subunit protein uS4 (208 aa).

One can recognise an S4 RNA-binding domain in the interval 98 to 161; the sequence is RRLDNVVYRM…KSNPQVVRAM (64 aa).

Belongs to the universal ribosomal protein uS4 family. In terms of assembly, part of the 30S ribosomal subunit. Contacts protein S5. The interaction surface between S4 and S5 is involved in control of translational fidelity.

In terms of biological role, one of the primary rRNA binding proteins, it binds directly to 16S rRNA where it nucleates assembly of the body of the 30S subunit. With S5 and S12 plays an important role in translational accuracy. The polypeptide is Small ribosomal subunit protein uS4 (Helicobacter acinonychis (strain Sheeba)).